The primary structure comprises 129 residues: MIGDTMSGIIDSYIPVAIFLAVGLIMPPMTMFMVKQLSPRSKAASKYTTYESGSVPTGTARIQFNVEYYLYAIAFVLFDIEVLFLYPWATVYKGHGITSIAVVEMFVFIFILLFGYVYLWKKEALTWVK.

3 consecutive transmembrane segments (helical) span residues 9-29 (IIDS…MPPM), 64-84 (FNVE…EVLF), and 95-115 (HGIT…LLFG).

It belongs to the complex I subunit 3 family. The FPO complex is composed of at least 13 different subunits. FpoA, FpoH, FpoJ, FpoK, FpoL, FpoM and FpoN proteins constitute the membrane sector of the complex.

It is found in the cell membrane. The enzyme catalyses methanophenazine + reduced coenzyme F420-(gamma-L-Glu)(n) = dihydromethanophenazine + oxidized coenzyme F420-(gamma-L-Glu)(n) + H(+). In terms of biological role, component of the F(420)H(2) dehydrogenase (FPO complex) which is part of the energy-conserving F(420)H(2):heterodisulfide oxidoreductase system. The membrane-bound electron transfer system of the complex plays an important role in the metabolism of methylotrophic methanogens when the organisms grow on methanol or methylamines. Catalyzes the oxidation of methanophenazine to dihydromethanophenazine. It shuttles electrons from F(420)H(2), via FAD and iron-sulfur (Fe-S) centers, to methanophenazine (an electron carrier in the membrane). It couples the redox reaction to proton translocation (for every two electrons transferred, two hydrogen ions are translocated across the cytoplasmic membrane), and thus conserves the redox energy in a proton gradient. It also catalyzes the oxidation of F(420)H(2) with quinones such as 2,3-dimethyl-1,4-naphthoquinone, 2-methyl-1,4-naphthoquinone and tetramethyl-p-benzoquinone. This is F(420)H(2) dehydrogenase subunit A (fpoA) from Methanosarcina mazei (strain ATCC BAA-159 / DSM 3647 / Goe1 / Go1 / JCM 11833 / OCM 88) (Methanosarcina frisia).